We begin with the raw amino-acid sequence, 136 residues long: DNA-directed RNA polymerase subunit omega (136 aa).

This sequence belongs to the RNA polymerase subunit omega family. The RNAP catalytic core consists of 2 alpha, 1 beta, 1 beta' and 1 omega subunit. When a sigma factor is associated with the core the holoenzyme is formed, which can initiate transcription.

The catalysed reaction is RNA(n) + a ribonucleoside 5'-triphosphate = RNA(n+1) + diphosphate. Its function is as follows. Promotes RNA polymerase assembly. Latches the N- and C-terminal regions of the beta' subunit thereby facilitating its interaction with the beta and alpha subunits. In Acidiphilium cryptum (strain JF-5), this protein is DNA-directed RNA polymerase subunit omega.